A 597-amino-acid polypeptide reads, in one-letter code: Adenine deaminase (597 aa).

This sequence belongs to the metallo-dependent hydrolases superfamily. Adenine deaminase family. It depends on Mn(2+) as a cofactor.

The catalysed reaction is adenine + H2O + H(+) = hypoxanthine + NH4(+). This chain is Adenine deaminase, found in Paracoccus denitrificans (strain Pd 1222).